The sequence spans 75 residues: Protein SlyX homolog (75 aa).

This sequence belongs to the SlyX family.

The polypeptide is Protein SlyX homolog (Vibrio campbellii (strain ATCC BAA-1116)).